A 359-amino-acid chain; its full sequence is MTKQIQVDLGERSYPIYIGQSLMSDGETLSRYLLKKRILIVTNETVAPLYLKQIQDTMASFGEVTSVILPDGEQFKDLTHLDSIFTALLQRNYGRDSVLVALGGGVIGDMTGFAAACYQRGVDFIQIPTTLLSQVDSSVGGKTAVNHPLGKNMIGAFYQPQIVIIDTECLQTLPAREFAAGMAEVIKYGIMWDAEFFQWLENNVQALKSLDTQALVYAISRCCEIKADVVSQDETEQGVRALLNLGHTFGHAIEAEMGYGNWLHGEAVAAGTVLAAQTAKSMGLIDESIVRRIVQLFHAFDLPVTAPESMDFDSFIKHMRRDKKVLGGQIRLVLPTAIGRADVFSQVPESTLEQVICCA.

NAD(+) is bound by residues 71-76 (DGEQFK), 105-109 (GVIGD), 129-130 (TT), Lys-142, Lys-151, and 169-172 (CLQT). Zn(2+) is bound by residues Glu-184, His-247, and His-264.

Belongs to the sugar phosphate cyclases superfamily. Dehydroquinate synthase family. The cofactor is Co(2+). Zn(2+) is required as a cofactor. NAD(+) serves as cofactor.

The protein resides in the cytoplasm. The catalysed reaction is 7-phospho-2-dehydro-3-deoxy-D-arabino-heptonate = 3-dehydroquinate + phosphate. It functions in the pathway metabolic intermediate biosynthesis; chorismate biosynthesis; chorismate from D-erythrose 4-phosphate and phosphoenolpyruvate: step 2/7. Catalyzes the conversion of 3-deoxy-D-arabino-heptulosonate 7-phosphate (DAHP) to dehydroquinate (DHQ). The protein is 3-dehydroquinate synthase of Shewanella sp. (strain ANA-3).